A 614-amino-acid polypeptide reads, in one-letter code: tRNA uridine 5-carboxymethylaminomethyl modification enzyme MnmG (614 aa).

An FAD-binding site is contributed by 10–15 (GAGHAG). Residue 271–285 (GPRYCPSIEDKIVKF) participates in NAD(+) binding.

Belongs to the MnmG family. As to quaternary structure, homodimer. Heterotetramer of two MnmE and two MnmG subunits. Requires FAD as cofactor.

It localises to the cytoplasm. In terms of biological role, NAD-binding protein involved in the addition of a carboxymethylaminomethyl (cmnm) group at the wobble position (U34) of certain tRNAs, forming tRNA-cmnm(5)s(2)U34. This is tRNA uridine 5-carboxymethylaminomethyl modification enzyme MnmG from Ureaplasma urealyticum serovar 10 (strain ATCC 33699 / Western).